Reading from the N-terminus, the 391-residue chain is Phosphoglycerate kinase (391 aa).

Substrate contacts are provided by residues 21 to 23 (DLN), Arg-36, 59 to 62 (HLGR), Arg-113, and Arg-146. ATP contacts are provided by residues Lys-197, Glu-319, and 345-348 (GGDT).

Belongs to the phosphoglycerate kinase family. Monomer.

The protein localises to the cytoplasm. The enzyme catalyses (2R)-3-phosphoglycerate + ATP = (2R)-3-phospho-glyceroyl phosphate + ADP. It participates in carbohydrate degradation; glycolysis; pyruvate from D-glyceraldehyde 3-phosphate: step 2/5. In Shewanella woodyi (strain ATCC 51908 / MS32), this protein is Phosphoglycerate kinase.